The primary structure comprises 543 residues: MTRFVFITGGVVSSLGKGIASAALAALLQARGYRVRLRKLDPYLNVDPGTMSPYQHGEVFVTDDGAETDLDLGHYERFTGVHATRADNATTGQIYSDVIARERRGDYLGATVQVIPHITDAIKEAVVAGTEDLDFVLVEIGGTVGDIESLPFLEAIRQLRNDLGAGQTMFVHLTLLPWIPSAGELKTKPTQHSVKELQNVGIQAQMLLCRSDRPIPDTERRKIANFCNVRPEAVIAALDVDTIYACPVSYHAEGMDTEVLRHFGLPHDQEPDLSAWNRVLDAMRHPEGEVRIAVVGKYTALLDAYKSLIEALQHGGIANRVRVKLDWVEAEIFEKSETAIEALRDAHAILVPGGFGERGSEGKIQAVRFAREHNIPFLGICFGMQMAVIECARNLAGLPDASSTEFGPTEEPLVGLMTEWARGNELLRRREGGEMGGTMRLGAYAAKLAEGSRVAEIYGKTEIRERHRHRYEVNVHYREVLEKAGLQFSGMSPDDILPEVVEYPNHPWFVAVQYHPELLSKPFDPHPLFSGFVGAAVKKMRLV.

The segment at 1–265 (MTRFVFITGG…DTEVLRHFGL (265 aa)) is amidoligase domain. Ser-13 lines the CTP pocket. Ser-13 lines the UTP pocket. Residue 14 to 19 (SLGKGI) participates in ATP binding. Tyr-54 lines the L-glutamine pocket. Asp-71 contacts ATP. Positions 71 and 139 each coordinate Mg(2+). Residues 146 to 148 (DIE), 186 to 191 (KTKPTQ), and Lys-222 contribute to the CTP site. UTP is bound by residues 186–191 (KTKPTQ) and Lys-222. A Glutamine amidotransferase type-1 domain is found at 291–542 (RIAVVGKYTA…VGAAVKKMRL (252 aa)). L-glutamine is bound at residue Gly-354. Catalysis depends on Cys-381, which acts as the Nucleophile; for glutamine hydrolysis. L-glutamine contacts are provided by residues 382–385 (FGMQ), Glu-405, and Arg-470. Residues His-515 and Glu-517 contribute to the active site.

The protein belongs to the CTP synthase family. As to quaternary structure, homotetramer.

It carries out the reaction UTP + L-glutamine + ATP + H2O = CTP + L-glutamate + ADP + phosphate + 2 H(+). The enzyme catalyses L-glutamine + H2O = L-glutamate + NH4(+). It catalyses the reaction UTP + NH4(+) + ATP = CTP + ADP + phosphate + 2 H(+). The protein operates within pyrimidine metabolism; CTP biosynthesis via de novo pathway; CTP from UDP: step 2/2. With respect to regulation, allosterically activated by GTP, when glutamine is the substrate; GTP has no effect on the reaction when ammonia is the substrate. The allosteric effector GTP functions by stabilizing the protein conformation that binds the tetrahedral intermediate(s) formed during glutamine hydrolysis. Inhibited by the product CTP, via allosteric rather than competitive inhibition. Catalyzes the ATP-dependent amination of UTP to CTP with either L-glutamine or ammonia as the source of nitrogen. Regulates intracellular CTP levels through interactions with the four ribonucleotide triphosphates. The sequence is that of CTP synthase from Gluconacetobacter diazotrophicus (strain ATCC 49037 / DSM 5601 / CCUG 37298 / CIP 103539 / LMG 7603 / PAl5).